A 144-amino-acid polypeptide reads, in one-letter code: Superoxide dismutase [Mn] (144 aa).

Positions 1 to 22 are disordered; sequence GYVNGLESAEETLAENRESGDF. Mn(2+) contacts are provided by His-42, Asp-124, and His-128.

The protein belongs to the iron/manganese superoxide dismutase family. Mn(2+) is required as a cofactor.

The catalysed reaction is 2 superoxide + 2 H(+) = H2O2 + O2. In terms of biological role, destroys superoxide anion radicals which are normally produced within the cells and which are toxic to biological systems. This is Superoxide dismutase [Mn] (sod) from Haloarcula hispanica.